The sequence spans 423 residues: COP9 signalosome complex subunit 3 (423 aa).

N-acetylalanine is present on alanine 2. In terms of domain architecture, PCI spans 197–365 (NFERALYFYE…GMVSFHDNPE (169 aa)). A disordered region spans residues 402–423 (QFVQKSMGSQEDDSGNKPSSYS). 3 positions are modified to phosphoserine: serine 407, serine 410, and serine 423.

Belongs to the CSN3 family. Component of the CSN complex, composed of COPS1/GPS1, COPS2, COPS3, COPS4, COPS5, COPS6, COPS7 (COPS7A or COPS7B), COPS8 and COPS9. In the complex, it probably interacts directly with COPS1, COPS4, COPS8 and COPS9. Interacts with CK2 and PKD. Interacts with the translation initiation factor EIF3S6 and IKBKG. Interacts with ERCC6. Widely expressed.

It localises to the cytoplasm. The protein resides in the nucleus. Component of the COP9 signalosome complex (CSN), a complex involved in various cellular and developmental processes. The CSN complex is an essential regulator of the ubiquitin (Ubl) conjugation pathway by mediating the deneddylation of the cullin subunits of SCF-type E3 ligase complexes, leading to decrease the Ubl ligase activity of SCF-type complexes such as SCF, CSA or DDB2. The complex is also involved in phosphorylation of p53/TP53, c-jun/JUN, IkappaBalpha/NFKBIA, ITPK1 and IRF8/ICSBP, possibly via its association with CK2 and PKD kinases. CSN-dependent phosphorylation of TP53 and JUN promotes and protects degradation by the Ubl system, respectively. Essential to maintain the survival of epiblast cells and thus the development of the postimplantation embryo. The sequence is that of COP9 signalosome complex subunit 3 (Cops3) from Mus musculus (Mouse).